The sequence spans 38 residues: Defensin D7 (38 aa).

The protein belongs to the DEFL family. Group IV subfamily. As to expression, distributed in the epidermal cell layer of leaves and in the subepidermal layer region of stems. Not in roots.

It is found in the secreted. It localises to the cell wall. Its function is as follows. Antimicrobial peptide. Active against Fusarium spp., Gram-positive and Gram-negative bacterial pathogens. The chain is Defensin D7 from Spinacia oleracea (Spinach).